A 173-amino-acid polypeptide reads, in one-letter code: Alpha-crystallin A chain (173 aa).

Residue M1 is modified to N-acetylmethionine. The required for complex formation with BFSP1 and BFSP2 stretch occupies residues 1-63 (MDVTIQHPWF…RTVLDSGISE (63 aa)). Q6 bears the Deamidated glutamine; partial mark. A Phosphoserine modification is found at S45. A Deamidated glutamine; partial modification is found at Q50. Positions 52 to 162 (LFRTVLDSGI…GHSERAIPVS (111 aa)) constitute a sHSP domain. Position 70 is an N6-acetyllysine (K70). At Q90 the chain carries Deamidated glutamine; partial. Residue K99 is modified to N6-acetyllysine. The Zn(2+) site is built by H100, E102, and H107. At S122 the chain carries Phosphoserine. Deamidated asparagine; partial is present on N123. The disordered stretch occupies residues 145–173 (KVQSGLDAGHSERAIPVSREEKPSSAPSS). Position 147 is a deamidated glutamine; partial (Q147). Positions 153–167 (GHSERAIPVSREEKP) are enriched in basic and acidic residues. H154 serves as a coordination point for Zn(2+). S162 is a glycosylation site (O-linked (GlcNAc) serine).

It belongs to the small heat shock protein (HSP20) family. As to quaternary structure, heteromer composed of three CRYAA and one CRYAB subunits. Inter-subunit bridging via zinc ions enhances stability, which is crucial as there is no protein turn over in the lens. Can also form homodimers and homotetramers (dimers of dimers) which serve as the building blocks of homooligomers. Within homooligomers, the zinc-binding motif is created from residues of 3 different molecules. His-100 and Glu-102 from one molecule are ligands of the zinc ion, and His-107 and His-154 residues from additional molecules complete the site with tetrahedral coordination geometry. Part of a complex required for lens intermediate filament formation composed of BFSP1, BFSP2 and CRYAA. Post-translationally, acetylation at Lys-70 may increase chaperone activity. Undergoes age-dependent proteolytical cleavage at the C-terminus.

Its subcellular location is the cytoplasm. It localises to the nucleus. Contributes to the transparency and refractive index of the lens. Acts as a chaperone, preventing aggregation of various proteins under a wide range of stress conditions. Required for the correct formation of lens intermediate filaments as part of a complex composed of BFSP1, BFSP2 and CRYAA. The sequence is that of Alpha-crystallin A chain (CRYAA) from Ochotona princeps (Southern American pika).